A 277-amino-acid polypeptide reads, in one-letter code: Exosome complex component Rrp42 (277 aa).

It belongs to the RNase PH family. Rrp42 subfamily. In terms of assembly, component of the archaeal exosome complex. Forms a hexameric ring-like arrangement composed of 3 Rrp41-Rrp42 heterodimers. The hexameric ring associates with a trimer of Rrp4 and/or Csl4 subunits.

Its subcellular location is the cytoplasm. Its function is as follows. Non-catalytic component of the exosome, which is a complex involved in RNA degradation. Contributes to the structuring of the Rrp41 active site. The sequence is that of Exosome complex component Rrp42 from Pyrococcus furiosus (strain ATCC 43587 / DSM 3638 / JCM 8422 / Vc1).